The following is a 418-amino-acid chain: UDP-N-acetylglucosamine 1-carboxyvinyltransferase (418 aa).

Residue 23-24 (KN) coordinates phosphoenolpyruvate. Residue Arg-93 coordinates UDP-N-acetyl-alpha-D-glucosamine. Residue Asp-117 is the Proton donor of the active site. UDP-N-acetyl-alpha-D-glucosamine is bound by residues Asp-305 and Val-327.

This sequence belongs to the EPSP synthase family. MurA subfamily.

It is found in the cytoplasm. The catalysed reaction is phosphoenolpyruvate + UDP-N-acetyl-alpha-D-glucosamine = UDP-N-acetyl-3-O-(1-carboxyvinyl)-alpha-D-glucosamine + phosphate. The protein operates within cell wall biogenesis; peptidoglycan biosynthesis. In terms of biological role, cell wall formation. Adds enolpyruvyl to UDP-N-acetylglucosamine. In Mycobacterium bovis (strain ATCC BAA-935 / AF2122/97), this protein is UDP-N-acetylglucosamine 1-carboxyvinyltransferase.